The following is an 8525-amino-acid chain: Nebulin (8525 aa).

Residues 34 to 70 form a disordered region; sequence TTTTRTSDYEQSETSKPALAQPALAQPASAKPVERRK. The span at 48–64 shows a compositional bias: low complexity; it reads SKPALAQPALAQPASAK. 235 Nebulin repeats span residues 83–110, 112–146, 156–181, 182–216, 217–251, 252–286, 296–321, 323–357, 362–396, 403–431, 433–467, 501–535, 536–570, 572–606, 610–644, 680–714, 748–782, 783–817, 819–853, 857–891, 892–918, 923–957, 968–986, 992–1026, 1027–1061, 1063–1097, 1101–1135, 1136–1166, 1167–1201, 1212–1230, 1236–1270, 1271–1305, 1307–1341, 1345–1379, 1380–1407, 1411–1445, 1456–1474, 1480–1514, 1515–1549, 1551–1585, 1589–1623, 1624–1654, 1655–1689, 1697–1725, 1730–1758, 1759–1793, 1795–1829, 1833–1867, 1868–1894, 1899–1933, 1949–1962, 1968–2002, 2003–2037, 2039–2073, 2077–2111, 2112–2138, 2143–2177, 2188–2206, 2212–2246, 2247–2281, 2283–2317, 2321–2355, 2356–2382, 2387–2421, 2436–2449, 2455–2489, 2490–2524, 2526–2560, 2564–2598, 2599–2625, 2630–2664, 2679–2692, 2698–2732, 2733–2767, 2769–2803, 2807–2841, 2842–2868, 2873–2907, 2917–2935, 2941–2975, 2976–3010, 3012–3046, 3050–3084, 3085–3111, 3116–3150, 3158–3178, 3184–3218, 3219–3253, 3255–3289, 3293–3327, 3328–3354, 3359–3393, 3401–3421, 3427–3461, 3462–3496, 3498–3532, 3536–3570, 3571–3597, 3602–3636, 3643–3664, 3670–3704, 3705–3739, 3741–3775, 3779–3813, 3814–3840, 3845–3879, 3889–3907, 3913–3947, 3948–3982, 3984–4018, 4022–4056, 4057–4083, 4088–4122, 4132–4149, 4156–4190, 4191–4225, 4227–4261, 4265–4299, 4300–4326, 4331–4365, 4375–4392, 4399–4433, 4434–4468, 4470–4504, 4508–4542, 4543–4569, 4574–4608, 4618–4635, 4642–4676, 4677–4711, 4713–4747, 4751–4785, 4786–4812, 4817–4851, 4861–4878, 4885–4919, 4920–4954, 4956–4990, 4994–5028, 5029–5055, 5060–5094, 5104–5121, 5128–5162, 5163–5197, 5199–5233, 5237–5271, 5272–5298, 5303–5337, 5347–5364, 5371–5405, 5406–5440, 5442–5476, 5480–5514, 5515–5541, 5546–5580, 5588–5607, 5614–5648, 5649–5683, 5690–5718, 5722–5756, 5757–5783, 5788–5822, 5829–5853, 5856–5890, 5893–5924, 5926–5960, 5964–5998, 5999–6025, 6030–6064, 6071–6099, 6100–6134, 6135–6169, 6171–6205, 6209–6243, 6244–6274, 6275–6309, 6316–6344, 6345–6379, 6380–6414, 6416–6450, 6458–6488, 6489–6515, 6532–6554, 6561–6589, 6590–6624, 6626–6660, 6661–6695, 6697–6731, 6732–6766, 6767–6801, 6808–6836, 6837–6871, 6872–6906, 6907–6941, 6942–6976, 6977–7011, 7012–7046, 7053–7081, 7082–7110, 7125–7151, 7152–7186, 7188–7222, 7223–7257, 7258–7292, 7297–7327, 7328–7362, 7365–7399, 7402–7433, 7436–7470, 7479–7505, 7514–7542, 7543–7577, 7578–7612, 7619–7647, 7650–7684, 7687–7721, 7731–7759, 7760–7794, 7795–7829, 7830–7864, 7867–7888, 7892–7921, 7930–7957, 7961–7988, 7992–8013, 8016–8045, 8054–8075, 8078–8112, 8116–8143, 8147–8168, 8171–8205, 8209–8232, 8233–8267, 8269–8303, and 8304–8330; these read TPYI…KTKG, PYAS…VAKT, DIEH…DTKD, KYLL…ADKS, LFYP…EQQA, QFTP…NKIK, EVAN…NMKD, IYFM…KNKG, NVLP…KTKA, ETPK…KDIL, HYVG…EDRG, KFTQ…SEKF, KCHI…KSKA, KFDI…KNKG, GVLS…KTKA, HYVG…EDKG, KFTA…GEKF, KFDI…KSKG, GALS…KSKT, IYTA…VDYK, SYSY…SWMK, EMEK…KYRQ, KFTS…EIIH, KYNL…DLSK, GYDL…KAKG, GFQS…KTKS, KYNT…HSLH, HYTY…NWMK, DVEK…KYRQ, KFTS…DVKH, KYTM…DLIA, GNNV…KSKG, GFRS…NTKT, SYHT…NYKQ, HYTY…SFLK, EVEK…KYRQ, KFTS…KLKH, KYTI…KTIA, GFLS…ASKT, KYHT…QSYH, HYTL…NWMK, ESLE…KLKF, DTME…KDKT, TIHV…EEKK, GYDL…QAKG, GFRS…KSKT, SFHT…ANYR, TYNM…DFMK, KKAM…KYRQ, KYST…ADKT, KVHI…ESKK, GYDL…KGKG, SYHT…TNYK, KYIL…EWYK, QFKK…KDKT, KIHV…EALK, GYDL…KQLG, GFRS…KWKT, KFSS…VDYK, QWTC…WLRG, KRAS…KYRQ, KFTS…KDKT, QIHI…ELKR, GARN…KWKT, QWTC…WLKG, KRAT…VYRQ, KFSS…KDKT, TVHI…EAKR, GYDM…KQLG, GARA…KWKT, QWTC…WMRG, DVEK…IYRQ, QIHI…EAKK, EWTC…WLRG, SMDV…IYRQ, QVHI…EAKK, GARA…KYKT, RYSS…VDYK, EWIC…WMKG, DSLE…IYRQ, KFTS…NDKK, TIHV…ESKK, KFSS…IDYK, KFTC…ADKT, SIHV…ESKM, DYDL…KQKG, GAQS…KWKT, KFSS…IDYR, EMNR…RLYR, SFTS…KDKS, NITI…DAKQ, GYDI…KQLG, GFRT…KSKG, IHNT…IDYR, EVMR…RLYR, KFTS…KEKA, NVNV…DVKM, GYDL…KQKG, GCRS…DHKA, KISI…VDYR, HWSC…WLRG, NITI…DTKQ, RWSC…WLRG, SPEV…SVYR, KYTS…KDKT, SIHI…EMKA, DAIP…KQKG, GTLT…KWKA, KIQS…MDYR, DSVS…TKIE, NFTP…ATKS, TLTE…RQKA, GYIL…KQKG, GVPT…KTKA, KINI…IDYR, QWMC…WLRG, DSVD…ENYP, NFRS…KAKG, KYTF…GTKA, GYTL…KQKG, AGKV…DTKA, NVHI…HYFH, QWTS…WLKG, DTPQ…ENLQ, NYNL…QIKD, KYTT…RVKA, SYIL…KFKA, VDDD…KNKM, KIHI…IDYR, HVRK…WLKG, DTPE…KTRN, DYKL…HSVR, KVAP…TLPT, GYRL…HTKA, GYTL…KLKD, KIHT…KMQG, HMIS…VLKG, DTPD…KMRD, KYKV…KQKS, IFTS…KERP, HHHA…KMKD, KYTP…KTKG, KYHT…SQLG, IWRS…WLKG, DTPD…RTKS, DFKY…YKSS, PDML…KSKD, KFTS…KAKP, GYTT…RNKS, NCTI…ANKA, HWKW…FLKG, VTDD…KERG, TCHA…KHLA, SYTT…KEKG, NYSI…DAKE, HYTT…KEGS, PDIE…KEKG, DSQL…KLHK, PVTD…KSKG, HYHT…KERG, ETPT…ESIK, NLTG…ESIR, GLTE…LEVK, ETPD…MEKA, NFTS…KSMS, YYET…NSKG, KITV…PGTA, KTPE…KYKE, QGTP…KENL, TPEI…KGIP, TPEM…KGTP, TPEM…YKEN, KGIP…KENL, KGTP…KGTP, KATA…KATP, TPEM…ENMR, KATP…KQIQ, KAAY…KHKG, and CFTP…INYR. Residues 8313-8468 form an interaction with SVIL region; it reads ITERVKKNMQ…SIPSHPSTAG (156 aa). Disordered stretches follow at residues 8385 to 8422 and 8439 to 8463; these read QAQR…LSTY and TTEL…IPSH. Residues 8405 to 8419 show a composition bias toward basic and acidic residues; sequence GEEKSEHSEAPDHHL. Residues 8444–8459 are compositionally biased toward low complexity; that stretch reads QQRSSSVATQQTTVSS. An SH3 domain is found at 8466-8525; sequence TAGKIFRAMYDYMAADADEVSFKDGDAIINVQAIDEGWMYGTVQRTGRTGMLPANYVEAI.

As to quaternary structure, monomer and homooligomer. Interacts with TTN/titin. Interacts with SVIL. Interacts (via nebulin repeats 160-164) with DES. In terms of tissue distribution, expressed in skeletal muscle (at protein level). Located in the thin filament of striated muscle.

The protein resides in the cytoplasm. Its subcellular location is the myofibril. It localises to the sarcomere. It is found in the cytoskeleton. This giant muscle protein may be involved in maintaining the structural integrity of sarcomeres and the membrane system associated with the myofibrils. Binds and stabilize F-actin. This Homo sapiens (Human) protein is Nebulin (NEB).